Here is a 575-residue protein sequence, read N- to C-terminus: MVMEDNESCASRVIFDALPTSQATMDRRERIKMEVFDEVLRRLRQSDIEDAHLPGFEDDLWNHFNRLPARYALDVNVERAEDVLMHKRLLHSAYDPQNRPAIEVHLVQVQPAGISADLDSTSNDAGHSSPTRKSIHPPPAFGSSPNLEALALAASLSQDEDADNSVHNNSLYSRPLHEITFSTEDKPKLLFQLTALLAELGLNIQEAHAFSTTDGYSLDVFVVDGWPYEETERLRISLEKEAAKIELQSQSWPMQQSFSPEKENGQTGARTHVPIPNDGTDVWEINLKHLKFGHKIASGSYGDLYKGTYCSQEVAIKVLKPERLDSDLEKEFAQEVFIMRKVRHKNVVQFIGACTKPPHLCIVTEFMPGGSVYDYLHKQKGVFKLPTLFKVAIDICKGMSYLHQNNIIHRDLKAANLLMDENEVVKVADFGVARVKAQTGVMTAETGTYRWMAPEVIEHKPYDHKADVFSYGIVLWELLTGKLPYEYMTPLQAAVGVVQKGLRPTIPKNTHPKLAELLERLWEHDSTQRPDFSEIIEQLQEIAKEVGEEGEEKKKSSTGLGGGIFAALRRSTTHH.

The disordered stretch occupies residues 116-140 (ADLDSTSNDAGHSSPTRKSIHPPPA). The segment covering 118–132 (LDSTSNDAGHSSPTR) has biased composition (polar residues). Residues 178 to 252 (EITFSTEDKP…AKIELQSQSW (75 aa)) enclose the ACT domain. In terms of domain architecture, Protein kinase spans 290-543 (LKFGHKIASG…EIIEQLQEIA (254 aa)). ATP is bound by residues 296-304 (IASGSYGDL) and lysine 317. Aspartate 411 functions as the Proton acceptor in the catalytic mechanism. Residue threonine 443 is modified to Phosphothreonine.

It belongs to the protein kinase superfamily. Ser/Thr protein kinase family. Autophosphorylated on serine and threonine residues. Autophosphorylated at Thr-443.

It localises to the cytoplasm. The protein localises to the cytosol. The enzyme catalyses L-seryl-[protein] + ATP = O-phospho-L-seryl-[protein] + ADP + H(+). The catalysed reaction is L-threonyl-[protein] + ATP = O-phospho-L-threonyl-[protein] + ADP + H(+). Activated by autophosphorylation at Thr-443. In terms of biological role, serine/threonine protein kinase that specifically phosphorylates chloroplast precursor proteins in the cytosol within the cleavable presequences (transit peptides). May be part of a cytosolic regulatory network involved in chloroplast protein import. Does not phosphorylate mitochondrion precursor proteins. Specific for ATP and does not utilize other NTPs. Plays a role in chloroplast biogenesis and differentiation in cotyledons, possibly through phosphorylation of chloroplast preproteins. This Arabidopsis thaliana (Mouse-ear cress) protein is Serine/threonine-protein kinase STY46.